The following is a 61-amino-acid chain: UPF0181 protein MS1074 (61 aa).

Belongs to the UPF0181 family.

In Mannheimia succiniciproducens (strain KCTC 0769BP / MBEL55E), this protein is UPF0181 protein MS1074.